Consider the following 213-residue polypeptide: Kynurenine formamidase (213 aa).

Trp-18 contacts substrate. Residues His-48, His-52, and Asp-54 each coordinate Zn(2+). His-58 serves as the catalytic Proton donor/acceptor. Zn(2+) is bound by residues His-160 and Glu-172.

Belongs to the Cyclase 1 superfamily. KynB family. In terms of assembly, homodimer. The cofactor is Zn(2+).

The enzyme catalyses N-formyl-L-kynurenine + H2O = L-kynurenine + formate + H(+). Its pathway is amino-acid degradation; L-tryptophan degradation via kynurenine pathway; L-kynurenine from L-tryptophan: step 2/2. Functionally, catalyzes the hydrolysis of N-formyl-L-kynurenine to L-kynurenine, the second step in the kynurenine pathway of tryptophan degradation. In Burkholderia cenocepacia (strain HI2424), this protein is Kynurenine formamidase.